The chain runs to 309 residues: Elongation factor Ts (309 aa).

The segment at 82-85 is involved in Mg(2+) ion dislocation from EF-Tu; the sequence is TDFV.

This sequence belongs to the EF-Ts family.

Its subcellular location is the cytoplasm. Its function is as follows. Associates with the EF-Tu.GDP complex and induces the exchange of GDP to GTP. It remains bound to the aminoacyl-tRNA.EF-Tu.GTP complex up to the GTP hydrolysis stage on the ribosome. The chain is Elongation factor Ts from Rickettsia massiliae (strain Mtu5).